A 71-amino-acid polypeptide reads, in one-letter code: MPVIKVRENEPFDVALRRFKRSCEKAGILSEVRSREFYEKPTTIRKRAKASAVKRHAKKLSRENARRIRLY.

A compositionally biased stretch (basic residues) spans 48 to 59 (AKASAVKRHAKK). The interval 48–71 (AKASAVKRHAKKLSRENARRIRLY) is disordered. Residues 60 to 71 (LSRENARRIRLY) show a composition bias toward basic and acidic residues.

It belongs to the bacterial ribosomal protein bS21 family.

This is Small ribosomal subunit protein bS21 from Aeromonas hydrophila subsp. hydrophila (strain ATCC 7966 / DSM 30187 / BCRC 13018 / CCUG 14551 / JCM 1027 / KCTC 2358 / NCIMB 9240 / NCTC 8049).